The primary structure comprises 539 residues: CTP synthase (539 aa).

An amidoligase domain region spans residues 1–268 (MSFKSIFLTG…SDFLLNKLGF (268 aa)). Serine 14 is a CTP binding site. Serine 14 lines the UTP pocket. 15–20 (SLGKGL) is a binding site for ATP. Tyrosine 55 is an L-glutamine binding site. Aspartate 72 serves as a coordination point for ATP. Mg(2+) is bound by residues aspartate 72 and glutamate 142. CTP is bound by residues 149 to 151 (DIE), 188 to 193 (KTKPTQ), and lysine 224. UTP contacts are provided by residues 188–193 (KTKPTQ) and lysine 224. ATP is bound at residue leucine 242. Residues 294–532 (RIGLVGKYLE…IRAAKAYSLE (239 aa)) enclose the Glutamine amidotransferase type-1 domain. Position 353 (glycine 353) interacts with L-glutamine. Residue cysteine 380 is the Nucleophile; for glutamine hydrolysis of the active site. Residues 381–384 (LGMQ), glutamate 404, and arginine 460 contribute to the L-glutamine site. Residues histidine 505 and glutamate 507 contribute to the active site.

This sequence belongs to the CTP synthase family. Homotetramer.

It catalyses the reaction UTP + L-glutamine + ATP + H2O = CTP + L-glutamate + ADP + phosphate + 2 H(+). The enzyme catalyses L-glutamine + H2O = L-glutamate + NH4(+). The catalysed reaction is UTP + NH4(+) + ATP = CTP + ADP + phosphate + 2 H(+). Its pathway is pyrimidine metabolism; CTP biosynthesis via de novo pathway; CTP from UDP: step 2/2. Its activity is regulated as follows. Allosterically activated by GTP, when glutamine is the substrate; GTP has no effect on the reaction when ammonia is the substrate. The allosteric effector GTP functions by stabilizing the protein conformation that binds the tetrahedral intermediate(s) formed during glutamine hydrolysis. Inhibited by the product CTP, via allosteric rather than competitive inhibition. Functionally, catalyzes the ATP-dependent amination of UTP to CTP with either L-glutamine or ammonia as the source of nitrogen. May be involved in lipopolysaccharide biosynthesis, potentially channelling CTP directly to CMP-KDO synthetase. Regulates intracellular CTP levels through interactions with the four ribonucleotide triphosphates. The chain is CTP synthase from Chlamydia trachomatis serovar D (strain ATCC VR-885 / DSM 19411 / UW-3/Cx).